A 139-amino-acid chain; its full sequence is Large-conductance mechanosensitive channel (139 aa).

A run of 2 helical transmembrane segments spans residues 17–37 (VVDM…VTSL) and 88–108 (TVDF…IMAA).

The protein belongs to the MscL family. As to quaternary structure, homopentamer.

It is found in the cell inner membrane. In terms of biological role, channel that opens in response to stretch forces in the membrane lipid bilayer. May participate in the regulation of osmotic pressure changes within the cell. This Porphyromonas gingivalis (strain ATCC 33277 / DSM 20709 / CIP 103683 / JCM 12257 / NCTC 11834 / 2561) protein is Large-conductance mechanosensitive channel.